The sequence spans 372 residues: Glycerol-3-phosphate dehydrogenase [NAD(+)] (372 aa).

Positions 1–16 (MAPSELNCTHQNQHSS) are enriched in polar residues. The disordered stretch occupies residues 1–23 (MAPSELNCTHQNQHSSGYDGPRS). Residues 29-34 (GSGNWG), Phe60, Phe117, Lys140, and Ala173 each bind NAD(+). Lys140 contacts substrate. The active-site Proton acceptor is Lys225. Residues Arg289, Lys318, and Gln320 each coordinate NAD(+). Residue 289-290 (RN) coordinates substrate.

Belongs to the NAD-dependent glycerol-3-phosphate dehydrogenase family.

It catalyses the reaction sn-glycerol 3-phosphate + NAD(+) = dihydroxyacetone phosphate + NADH + H(+). The chain is Glycerol-3-phosphate dehydrogenase [NAD(+)] (GPDH) from Cuphea lanceolata (Cigar flower).